A 180-amino-acid polypeptide reads, in one-letter code: Large ribosomal subunit protein uL6 (180 aa).

The protein belongs to the universal ribosomal protein uL6 family. As to quaternary structure, part of the 50S ribosomal subunit.

This protein binds to the 23S rRNA, and is important in its secondary structure. It is located near the subunit interface in the base of the L7/L12 stalk, and near the tRNA binding site of the peptidyltransferase center. This Cutibacterium acnes (strain DSM 16379 / KPA171202) (Propionibacterium acnes) protein is Large ribosomal subunit protein uL6.